The primary structure comprises 697 residues: Colicin-D (697 aa).

A TonB box motif is present at residues 17 to 24 (HSMVVWPS).

Belongs to the cloacin colicin family.

Functionally, colicins are polypeptide toxins produced by and active against E.coli and closely related bacteria. In terms of biological role, colicin D inhibits protein synthesis. This chain is Colicin-D (cda), found in Escherichia coli.